Reading from the N-terminus, the 349-residue chain is Isopentenyl-diphosphate delta-isomerase (349 aa).

Residue 6–7 (RK) coordinates substrate. FMN contacts are provided by residues 62-64 (AMT), serine 93, and asparagine 122. Position 152 (glutamine 152) interacts with substrate. A Mg(2+)-binding site is contributed by glutamate 153. FMN is bound by residues lysine 184, threonine 214, 258-259 (GG), and 280-281 (AG).

The protein belongs to the IPP isomerase type 2 family. As to quaternary structure, homooctamer. Dimer of tetramers. Requires FMN as cofactor. NADPH serves as cofactor. Mg(2+) is required as a cofactor.

The protein localises to the cytoplasm. It catalyses the reaction isopentenyl diphosphate = dimethylallyl diphosphate. Functionally, involved in the biosynthesis of isoprenoids. Catalyzes the 1,3-allylic rearrangement of the homoallylic substrate isopentenyl (IPP) to its allylic isomer, dimethylallyl diphosphate (DMAPP). This Bacillus licheniformis (strain ATCC 14580 / DSM 13 / JCM 2505 / CCUG 7422 / NBRC 12200 / NCIMB 9375 / NCTC 10341 / NRRL NRS-1264 / Gibson 46) protein is Isopentenyl-diphosphate delta-isomerase.